The sequence spans 342 residues: 4-hydroxy-3-methylbut-2-enyl diphosphate reductase (342 aa).

Cys47 is a binding site for [4Fe-4S] cluster. (2E)-4-hydroxy-3-methylbut-2-enyl diphosphate is bound by residues His78 and His111. His78 and His111 together coordinate dimethylallyl diphosphate. His78 and His111 together coordinate isopentenyl diphosphate. Cys133 contacts [4Fe-4S] cluster. His161 provides a ligand contact to (2E)-4-hydroxy-3-methylbut-2-enyl diphosphate. Position 161 (His161) interacts with dimethylallyl diphosphate. Position 161 (His161) interacts with isopentenyl diphosphate. Catalysis depends on Glu163, which acts as the Proton donor. Thr201 provides a ligand contact to (2E)-4-hydroxy-3-methylbut-2-enyl diphosphate. Cys231 contributes to the [4Fe-4S] cluster binding site. Positions 259, 260, 261, and 303 each coordinate (2E)-4-hydroxy-3-methylbut-2-enyl diphosphate. Ser259, Ser260, Asn261, and Ser303 together coordinate dimethylallyl diphosphate. Isopentenyl diphosphate contacts are provided by Ser259, Ser260, Asn261, and Ser303.

It belongs to the IspH family. Requires [4Fe-4S] cluster as cofactor.

It catalyses the reaction isopentenyl diphosphate + 2 oxidized [2Fe-2S]-[ferredoxin] + H2O = (2E)-4-hydroxy-3-methylbut-2-enyl diphosphate + 2 reduced [2Fe-2S]-[ferredoxin] + 2 H(+). The enzyme catalyses dimethylallyl diphosphate + 2 oxidized [2Fe-2S]-[ferredoxin] + H2O = (2E)-4-hydroxy-3-methylbut-2-enyl diphosphate + 2 reduced [2Fe-2S]-[ferredoxin] + 2 H(+). Its pathway is isoprenoid biosynthesis; dimethylallyl diphosphate biosynthesis; dimethylallyl diphosphate from (2E)-4-hydroxy-3-methylbutenyl diphosphate: step 1/1. The protein operates within isoprenoid biosynthesis; isopentenyl diphosphate biosynthesis via DXP pathway; isopentenyl diphosphate from 1-deoxy-D-xylulose 5-phosphate: step 6/6. Catalyzes the conversion of 1-hydroxy-2-methyl-2-(E)-butenyl 4-diphosphate (HMBPP) into a mixture of isopentenyl diphosphate (IPP) and dimethylallyl diphosphate (DMAPP). Acts in the terminal step of the DOXP/MEP pathway for isoprenoid precursor biosynthesis. The protein is 4-hydroxy-3-methylbut-2-enyl diphosphate reductase of Anaplasma marginale (strain St. Maries).